The primary structure comprises 243 residues: UPF0246 protein Sez_1855 (243 aa).

It belongs to the UPF0246 family.

The sequence is that of UPF0246 protein Sez_1855 from Streptococcus equi subsp. zooepidemicus (strain MGCS10565).